A 635-amino-acid polypeptide reads, in one-letter code: Threonine--tRNA ligase (635 aa).

A TGS domain is found at 1-61; the sequence is MINISFPDGS…DNDCRLRILT (61 aa). The catalytic stretch occupies residues 242–533; that stretch reads DHRKLGKELD…LIEEYAGRFP (292 aa). Cys333, His384, and His510 together coordinate Zn(2+).

This sequence belongs to the class-II aminoacyl-tRNA synthetase family. Homodimer. Zn(2+) serves as cofactor.

The protein localises to the cytoplasm. The enzyme catalyses tRNA(Thr) + L-threonine + ATP = L-threonyl-tRNA(Thr) + AMP + diphosphate + H(+). In terms of biological role, catalyzes the attachment of threonine to tRNA(Thr) in a two-step reaction: L-threonine is first activated by ATP to form Thr-AMP and then transferred to the acceptor end of tRNA(Thr). Also edits incorrectly charged L-seryl-tRNA(Thr). The sequence is that of Threonine--tRNA ligase from Rickettsia bellii (strain RML369-C).